We begin with the raw amino-acid sequence, 146 residues long: D-aminoacyl-tRNA deacylase (146 aa).

A Gly-cisPro motif, important for rejection of L-amino acids motif is present at residues 137–138 (GP).

Belongs to the DTD family. Homodimer.

The protein localises to the cytoplasm. The catalysed reaction is glycyl-tRNA(Ala) + H2O = tRNA(Ala) + glycine + H(+). The enzyme catalyses a D-aminoacyl-tRNA + H2O = a tRNA + a D-alpha-amino acid + H(+). An aminoacyl-tRNA editing enzyme that deacylates mischarged D-aminoacyl-tRNAs. Also deacylates mischarged glycyl-tRNA(Ala), protecting cells against glycine mischarging by AlaRS. Acts via tRNA-based rather than protein-based catalysis; rejects L-amino acids rather than detecting D-amino acids in the active site. By recycling D-aminoacyl-tRNA to D-amino acids and free tRNA molecules, this enzyme counteracts the toxicity associated with the formation of D-aminoacyl-tRNA entities in vivo and helps enforce protein L-homochirality. This Bacillus cereus (strain ATCC 14579 / DSM 31 / CCUG 7414 / JCM 2152 / NBRC 15305 / NCIMB 9373 / NCTC 2599 / NRRL B-3711) protein is D-aminoacyl-tRNA deacylase.